Consider the following 229-residue polypeptide: Growth factor receptor-bound protein 2 (229 aa).

2 SH3 domains span residues 1 to 58 (MEAV…MKPH) and 168 to 227 (QQPT…PVNR). The SH2 domain maps to 60-171 (WFFGKIPRAK…RATNLLQQPT (112 aa)).

The protein localises to the nucleus. The protein resides in the cytoplasm. It is found in the endosome. Its subcellular location is the golgi apparatus. Its function is as follows. Adapter protein that provides a critical link between cell surface growth factor receptors and the Ras signaling pathway. Promotes meiotic reinitiation during oocyte maturation. In Xenopus tropicalis (Western clawed frog), this protein is Growth factor receptor-bound protein 2.